Consider the following 229-residue polypeptide: Heptaprenylglyceryl phosphate synthase (229 aa).

Lysine 12 is a sn-glycerol 1-phosphate binding site. Aspartate 14 and serine 40 together coordinate Mg(2+). Residues 159–164 (YLEYSG), glycine 189, and 209–210 (GN) contribute to the sn-glycerol 1-phosphate site.

Belongs to the GGGP/HepGP synthase family. Group I subfamily. Homodimer. It depends on Mg(2+) as a cofactor.

It catalyses the reaction sn-glycerol 1-phosphate + all-trans-heptaprenyl diphosphate = 3-heptaprenyl-sn-glycero-1-phosphate + diphosphate. It participates in membrane lipid metabolism; glycerophospholipid metabolism. Its function is as follows. Prenyltransferase that catalyzes in vivo the transfer of the heptaprenyl moiety of heptaprenyl pyrophosphate (HepPP; 35 carbon atoms) to the C3 hydroxyl of sn-glycerol-1-phosphate (G1P), producing heptaprenylglyceryl phosphate (HepGP). This reaction is an ether-bond-formation step in the biosynthesis of archaea-type G1P-based membrane lipids found in Bacillales. The chain is Heptaprenylglyceryl phosphate synthase from Bacillus velezensis (strain DSM 23117 / BGSC 10A6 / LMG 26770 / FZB42) (Bacillus amyloliquefaciens subsp. plantarum).